The following is a 96-amino-acid chain: MKQFYSVVLTIIIYISSQSNVVSLDCRKLNEDCSKTVFSPCCDPLSCALSTAFNGKCKACLAGGYFCWRSDECCSGTCSWLKCTNPLTDIINKLTD.

The signal sequence occupies residues 1–23; the sequence is MKQFYSVVLTIIIYISSQSNVVS. Cystine bridges form between Cys60–Cys74, Cys67–Cys78, and Cys73–Cys83.

It is found in the secreted. This is an uncharacterized protein from Schistosoma japonicum (Blood fluke).